The following is a 315-amino-acid chain: MKPRHIPVFDGHNDALTRLWLSDHPDPVHAFIHERLVGHLDLKRCQEAGFIGGMFAIFLPPYSYVQQHHSNKLFDQNASDFTQQQIEQICLEQLDLAHQLAQYSKNIKICTSVQDIQDCRAEKKLAIVLHMEGAEALQQNPDLLDVFYERGLRSIGPLWNRPSRFGHGLNAKFPHSPDTGAGLTSDGKDFIKRCANKKMVIDVSHMNEKAFWNTVDILQQPIVATHSNSHALCPQARNLTDPQLKAIRESKGMVGVNFDVAFLRSDGQRNADTSIDVILEHLEYLMDRVAPLLHPRSKLRKGTHKRTPGRAGDAD.

The span at 296–308 (RSKLRKGTHKRTP) shows a compositional bias: basic residues. Residues 296 to 315 (RSKLRKGTHKRTPGRAGDAD) form a disordered region.

It belongs to the metallo-dependent hydrolases superfamily. Peptidase M19 family.

This is an uncharacterized protein from Acinetobacter calcoaceticus.